We begin with the raw amino-acid sequence, 658 residues long: Threonine--tRNA ligase (658 aa).

The region spanning 1-64 (MSNTVSLQFP…GASGKVEIIT (64 aa)) is the TGS domain. The catalytic stretch occupies residues 246-548 (DHRRLGREMD…LIENFAGHMP (303 aa)). Zn(2+) is bound by residues Cys-343, His-394, and His-525.

The protein belongs to the class-II aminoacyl-tRNA synthetase family. As to quaternary structure, homodimer. Requires Zn(2+) as cofactor.

The protein localises to the cytoplasm. The catalysed reaction is tRNA(Thr) + L-threonine + ATP = L-threonyl-tRNA(Thr) + AMP + diphosphate + H(+). Functionally, catalyzes the attachment of threonine to tRNA(Thr) in a two-step reaction: L-threonine is first activated by ATP to form Thr-AMP and then transferred to the acceptor end of tRNA(Thr). Also edits incorrectly charged L-seryl-tRNA(Thr). The polypeptide is Threonine--tRNA ligase (Brucella melitensis biotype 1 (strain ATCC 23456 / CCUG 17765 / NCTC 10094 / 16M)).